We begin with the raw amino-acid sequence, 139 residues long: Transcription initiation factor IIA small chain homolog (139 aa).

Residues 113–139 (LSAQGPSKRVNRAHAAAAGDDEDDDSD) form a disordered region.

The protein belongs to the TFIIA subunit 2 family.

It is found in the nucleus. The polypeptide is Transcription initiation factor IIA small chain homolog (Caenorhabditis elegans).